The chain runs to 359 residues: 2-epi-5-epi-valiolone 7-kinase (359 aa).

Residues 28–48 (GGLGEVHTTPSPGHARRPGAG) form a disordered region.

It belongs to the ROK (NagC/XylR) family.

It catalyses the reaction 2-epi-5-epi-valiolone + ATP = 2-epi-5-epi-valiolone 7-phosphate + ADP + H(+). Catalyzes the conversion of 2-epi-5-epi-valiolone to 2-epi-5-epi-valiolone 7-phosphate. Involved in the biosynthesis of the acarviose moiety of the alpha-glucosidase inhibitor acarbose. This Actinoplanes sp. (strain ATCC 31044 / CBS 674.73 / SE50/110) protein is 2-epi-5-epi-valiolone 7-kinase.